The primary structure comprises 310 residues: 2-phospho-L-lactate transferase (310 aa).

2 residues coordinate 7,8-didemethyl-8-hydroxy-5-deazariboflavin: D50 and R89.

It belongs to the CofD family. Homodimer. Mg(2+) serves as cofactor.

It carries out the reaction (2S)-lactyl-2-diphospho-5'-guanosine + 7,8-didemethyl-8-hydroxy-5-deazariboflavin = oxidized coenzyme F420-0 + GMP + H(+). The protein operates within cofactor biosynthesis; coenzyme F420 biosynthesis. Its function is as follows. Catalyzes the transfer of the 2-phospholactate moiety from (2S)-lactyl-2-diphospho-5'-guanosine to 7,8-didemethyl-8-hydroxy-5-deazariboflavin (FO) with the formation of oxidized coenzyme F420-0 and GMP. The sequence is that of 2-phospho-L-lactate transferase from Methanopyrus kandleri (strain AV19 / DSM 6324 / JCM 9639 / NBRC 100938).